A 160-amino-acid chain; its full sequence is Gene 34 protein (160 aa).

Residues 1–11 (MDSPRGISTAT) show a composition bias toward polar residues. Residues 1 to 26 (MDSPRGISTATGDAHAEAAVSPAAEI) are disordered.

The chain is Gene 34 protein from Equus caballus (Horse).